Consider the following 143-residue polypeptide: MIDISGKDIVLREAIAEGFIKLKKDTIEKITKREIEKGDVIATAKVAGILAAKKTHELLPMCHPIPLEYINVEIEIENDGLKVVSTVRAHYRTGVEMEALTATSIALLTIWDMVKKYEKDEEGQYPLTEISKIRVVSKIKSYG.

Substrate contacts are provided by residues Met-61–His-63 and Met-97–Glu-98. Residue Asp-112 is part of the active site.

Belongs to the MoaC family. As to quaternary structure, homohexamer; trimer of dimers.

It catalyses the reaction (8S)-3',8-cyclo-7,8-dihydroguanosine 5'-triphosphate = cyclic pyranopterin phosphate + diphosphate. It participates in cofactor biosynthesis; molybdopterin biosynthesis. Functionally, catalyzes the conversion of (8S)-3',8-cyclo-7,8-dihydroguanosine 5'-triphosphate to cyclic pyranopterin monophosphate (cPMP). The chain is Probable cyclic pyranopterin monophosphate synthase from Sulfolobus acidocaldarius (strain ATCC 33909 / DSM 639 / JCM 8929 / NBRC 15157 / NCIMB 11770).